Here is a 280-residue protein sequence, read N- to C-terminus: 4-diphosphocytidyl-2-C-methyl-D-erythritol kinase (280 aa).

Lys11 is an active-site residue. An ATP-binding site is contributed by 95–105 (PVGAGLGGGSS). The active site involves Asp137.

The protein belongs to the GHMP kinase family. IspE subfamily.

It catalyses the reaction 4-CDP-2-C-methyl-D-erythritol + ATP = 4-CDP-2-C-methyl-D-erythritol 2-phosphate + ADP + H(+). It participates in isoprenoid biosynthesis; isopentenyl diphosphate biosynthesis via DXP pathway; isopentenyl diphosphate from 1-deoxy-D-xylulose 5-phosphate: step 3/6. Functionally, catalyzes the phosphorylation of the position 2 hydroxy group of 4-diphosphocytidyl-2C-methyl-D-erythritol. The protein is 4-diphosphocytidyl-2-C-methyl-D-erythritol kinase of Geobacter sp. (strain M21).